A 708-amino-acid polypeptide reads, in one-letter code: Alpha-galactosidase (708 aa).

D441 (nucleophile) is an active-site residue. D505 serves as the catalytic Proton donor.

This sequence belongs to the glycosyl hydrolase 36 family. Homotetramer.

The catalysed reaction is Hydrolysis of terminal, non-reducing alpha-D-galactose residues in alpha-D-galactosides, including galactose oligosaccharides, galactomannans and galactolipids.. This is Alpha-galactosidase (rafA) from Escherichia coli.